The following is a 1069-amino-acid chain: Rab GTPase-activating protein 1 (1069 aa).

Residues 1-79 form a disordered region; that stretch reads MDDKASVGKI…DPPMDDQPGE (79 aa). Residues 7–22 show a composition bias toward low complexity; sequence VGKISVSSDSVSTLNS. At Ser-42 the chain carries Phosphoserine. Positions 142–298 constitute a PID domain; sequence EDSVVFSKLT…IFTFSVSLEI (157 aa). Residue Ser-360 is modified to Phosphoserine. A disordered region spans residues 482-527; the sequence is ERERRKTTASPSVRLPQSGSQSSVIPSPPEDDEEEDNDEPLLSGSG. Residues 489 to 506 are compositionally biased toward polar residues; it reads TASPSVRLPQSGSQSSVI. The span at 510 to 520 shows a compositional bias: acidic residues; sequence PEDDEEEDNDE. The 187-residue stretch at 566-752 folds into the Rab-GAP TBC domain; it reads GVPEALRGEV…HIIDLLLCEG (187 aa). Positions 798-1047 form a coiled coil; the sequence is KKLMELACNM…ALNEVQAAKK (250 aa). Thr-996 bears the Phosphothreonine mark.

As to quaternary structure, interacts with RAB6A and tubulin gamma.

The protein resides in the cytoplasm. It localises to the cytosol. Its subcellular location is the cytoskeleton. The protein localises to the microtubule organizing center. It is found in the centrosome. Its function is as follows. May act as a GTPase-activating protein of RAB6A. May play a role in microtubule nucleation by centrosome. May participate in a RAB6A-mediated pathway involved in the metaphase-anaphase transition. This chain is Rab GTPase-activating protein 1 (RABGAP1), found in Homo sapiens (Human).